Here is a 453-residue protein sequence, read N- to C-terminus: Pup--protein ligase (453 aa).

Residue Glu9 coordinates Mg(2+). Arg53 is a binding site for ATP. Tyr55 contributes to the Mg(2+) binding site. Asp57 (proton acceptor) is an active-site residue. Glu63 provides a ligand contact to Mg(2+). ATP is bound by residues Thr66 and Trp420.

The protein belongs to the Pup ligase/Pup deamidase family. Pup-conjugating enzyme subfamily.

The catalysed reaction is ATP + [prokaryotic ubiquitin-like protein]-L-glutamate + [protein]-L-lysine = ADP + phosphate + N(6)-([prokaryotic ubiquitin-like protein]-gamma-L-glutamyl)-[protein]-L-lysine.. The protein operates within protein degradation; proteasomal Pup-dependent pathway. It participates in protein modification; protein pupylation. Functionally, catalyzes the covalent attachment of the prokaryotic ubiquitin-like protein modifier Pup to the proteasomal substrate proteins, thereby targeting them for proteasomal degradation. This tagging system is termed pupylation. The ligation reaction involves the side-chain carboxylate of the C-terminal glutamate of Pup and the side-chain amino group of a substrate lysine. The polypeptide is Pup--protein ligase (Kribbella flavida (strain DSM 17836 / JCM 10339 / NBRC 14399)).